The sequence spans 513 residues: Protein PNS1 (513 aa).

Residues 1-13 show a composition bias toward pro residues; sequence MSNNNYPPPPNPP. Residues 1 to 41 are disordered; sequence MSNNNYPPPPNPPNYQGEEQVHNVQPDLENNQEKYYAEQPQ. Over 1–60 the chain is Cytoplasmic; that stretch reads MSNNNYPPPPNPPNYQGEEQVHNVQPDLENNQEKYYAEQPQPSQQFEESFKIDKPKWNDW. A helical transmembrane segment spans residues 61-81; sequence PFTVFFLLTVAGFIAIAGITL. Topologically, residues 82-108 are extracellular; it reads NALKKTYGLQGSSIYNSTDTFTLNTNT. An N-linked (GlcNAc...) asparagine glycan is attached at N97. Residues 109 to 129 form a helical membrane-spanning segment; that stretch reads IILFGFIIVVGVVLSVLIIVY. Residues 130–136 lie on the Cytoplasmic side of the membrane; sequence ARMAPRV. The chain crosses the membrane as a helical span at residues 137-157; it reads FITTGLILNIILGLGTCIYYF. At 158–163 the chain is on the extracellular side; sequence VAHYYS. Residues 164 to 182 form a helical membrane-spanning segment; the sequence is AAIVFLVFTLFTAWCYWSC. At 183–210 the chain is on the cytoplasmic side; it reads RHRIPFSATVLEITIDVMKRYPSTLITS. A helical transmembrane segment spans residues 211 to 231; that stretch reads FIGIIVSGLFSTLFSVVIVAT. The Extracellular segment spans residues 232–251; sequence YVKYDPDSQGCDVAGGGCSQ. Residues 252–272 traverse the membrane as a helical segment; sequence SKLIGVLVFVFFAGYYISEVI. At 273-309 the chain is on the cytoplasmic side; sequence KNVIHITIAGIYGTWYYLSNSDQGEPKHPALGAFKRA. A helical transmembrane segment spans residues 310-330; sequence MTYCFGSVCFGSLIVSIIQLI. Over 331-346 the chain is Extracellular; that stretch reads RSFVQILKQNAFGSGD. A helical membrane pass occupies residues 347–367; that stretch reads NCAGCGFLILDFVLGFIDWIV. The Cytoplasmic segment spans residues 368–412; sequence RYFNHYAYCYVALYGKSYLKSARDTFDLIRFKGMDALINDCFINT. The helical transmembrane segment at 413–433 threads the bilayer; that stretch reads SLNLYSMFVGYVVALLAYFYL. The Extracellular segment spans residues 434-460; the sequence is KFTDPAYNSSGTFYAPVVAFSFLISGQ. N441 is a glycosylation site (N-linked (GlcNAc...) asparagine). A helical membrane pass occupies residues 461–481; that stretch reads ITRIALTVISSGISTFFVALA. Topologically, residues 482 to 513 are cytoplasmic; it reads KDPEVFQMTNRDRFDEIFRNYPQVLQKITSDH.

It belongs to the CTL (choline transporter-like) family.

The protein localises to the cell membrane. Its function is as follows. Probably involved in transport through the plasma membrane. This Debaryomyces hansenii (strain ATCC 36239 / CBS 767 / BCRC 21394 / JCM 1990 / NBRC 0083 / IGC 2968) (Yeast) protein is Protein PNS1 (PNS1).